A 192-amino-acid polypeptide reads, in one-letter code: Fe/S biogenesis protein NfuA (192 aa).

Residues cysteine 149 and cysteine 152 each contribute to the [4Fe-4S] cluster site.

The protein belongs to the NfuA family. Homodimer. The cofactor is [4Fe-4S] cluster.

Functionally, involved in iron-sulfur cluster biogenesis. Binds a 4Fe-4S cluster, can transfer this cluster to apoproteins, and thereby intervenes in the maturation of Fe/S proteins. Could also act as a scaffold/chaperone for damaged Fe/S proteins. This chain is Fe/S biogenesis protein NfuA, found in Shewanella sp. (strain ANA-3).